The sequence spans 70 residues: Large ribosomal subunit protein bL31 (70 aa).

Residues Cys-16, Cys-18, Cys-37, and Cys-40 each coordinate Zn(2+).

Belongs to the bacterial ribosomal protein bL31 family. Type A subfamily. Part of the 50S ribosomal subunit. The cofactor is Zn(2+).

Functionally, binds the 23S rRNA. The chain is Large ribosomal subunit protein bL31 from Psychromonas ingrahamii (strain DSM 17664 / CCUG 51855 / 37).